The sequence spans 228 residues: NAD(P)H-quinone oxidoreductase subunit K, chloroplastic (228 aa).

[4Fe-4S] cluster is bound by residues Cys-43, Cys-44, Cys-108, and Cys-139.

Belongs to the complex I 20 kDa subunit family. NDH is composed of at least 16 different subunits, 5 of which are encoded in the nucleus. [4Fe-4S] cluster serves as cofactor.

The protein localises to the plastid. Its subcellular location is the chloroplast thylakoid membrane. The enzyme catalyses a plastoquinone + NADH + (n+1) H(+)(in) = a plastoquinol + NAD(+) + n H(+)(out). It carries out the reaction a plastoquinone + NADPH + (n+1) H(+)(in) = a plastoquinol + NADP(+) + n H(+)(out). In terms of biological role, NDH shuttles electrons from NAD(P)H:plastoquinone, via FMN and iron-sulfur (Fe-S) centers, to quinones in the photosynthetic chain and possibly in a chloroplast respiratory chain. The immediate electron acceptor for the enzyme in this species is believed to be plastoquinone. Couples the redox reaction to proton translocation, and thus conserves the redox energy in a proton gradient. The chain is NAD(P)H-quinone oxidoreductase subunit K, chloroplastic from Ceratophyllum demersum (Rigid hornwort).